Here is a 530-residue protein sequence, read N- to C-terminus: Seeligeriolysin (530 aa).

The N-terminal stretch at M1–R25 is a signal peptide. The tract at residues T36 to E55 is disordered. 4 consecutive transmembrane segments (beta stranded) span residues E215–A228, V235–K244, S313–A322, and K330–S342. The Conserved undecapeptide motif lies at E484–R494. The Cholesterol binding signature appears at T516–L517.

Belongs to the cholesterol-dependent cytolysin family. As to quaternary structure, homooligomeric pore complex of 35 to 50 subunits; when inserted in the host membrane.

It is found in the secreted. It localises to the host cell membrane. In terms of biological role, a cholesterol-dependent toxin that causes cytolysis by forming pores in cholesterol containing host membranes. L.seeligeri is non-pathogenic, perhaps in part because this protein is about 25% as toxic as listeriolysin O. Mutating a single residue in the undecapeptide increases toxicity 2-fold. After binding to target membranes, the protein undergoes a major conformation change, leading to its insertion in the host membrane and formation of an oligomeric pore complex. Cholesterol is required for binding to host membranes, membrane insertion and pore formation; cholesterol binding is mediated by a Thr-Leu pair in the C-terminus. Can be reversibly inactivated by oxidation. In Listeria seeligeri, this protein is Seeligeriolysin.